The following is a 278-amino-acid chain: Cell division protein FtsQ (278 aa).

The Cytoplasmic portion of the chain corresponds to 1 to 6 (MNATLR). The helical transmembrane segment at 7 to 27 (ILAWLIAVALVALPVVAVLNG) threads the bilayer. Residues 28 to 278 (WVGAERWPLA…SPFAIPGFKT (251 aa)) are Periplasmic-facing. Positions 34-103 (WPLARLRVSG…DVLEVHVVEH (70 aa)) constitute a POTRA domain.

Belongs to the FtsQ/DivIB family. FtsQ subfamily. Part of a complex composed of FtsB, FtsL and FtsQ.

The protein resides in the cell inner membrane. Essential cell division protein. May link together the upstream cell division proteins, which are predominantly cytoplasmic, with the downstream cell division proteins, which are predominantly periplasmic. May control correct divisome assembly. The sequence is that of Cell division protein FtsQ from Xanthomonas campestris pv. campestris (strain ATCC 33913 / DSM 3586 / NCPPB 528 / LMG 568 / P 25).